We begin with the raw amino-acid sequence, 98 residues long: MASRFMTDPHAMRDMAGRFEVHAQTVEDEARRMWASAQNISGAGWSGMAEATSLDTMAQMNQAFRNIVNMLHGVRDGLVRDANNYEQQEQASQQILSS.

The protein belongs to the WXG100 family. CFP-10 subfamily. As to quaternary structure, strongly interacts with EsxL to form a heterodimeric complex under reducing conditions. The complex is regulated by the redox state of EsxL.

The protein localises to the secreted. This Mycobacterium tuberculosis (strain ATCC 25618 / H37Rv) protein is ESAT-6-like protein EsxK.